The primary structure comprises 882 residues: Alanine--tRNA ligase (882 aa).

Zn(2+) contacts are provided by H564, H568, C666, and H670.

It belongs to the class-II aminoacyl-tRNA synthetase family. Zn(2+) is required as a cofactor.

It is found in the cytoplasm. The enzyme catalyses tRNA(Ala) + L-alanine + ATP = L-alanyl-tRNA(Ala) + AMP + diphosphate. Functionally, catalyzes the attachment of alanine to tRNA(Ala) in a two-step reaction: alanine is first activated by ATP to form Ala-AMP and then transferred to the acceptor end of tRNA(Ala). Also edits incorrectly charged Ser-tRNA(Ala) and Gly-tRNA(Ala) via its editing domain. This chain is Alanine--tRNA ligase, found in Rubrobacter xylanophilus (strain DSM 9941 / JCM 11954 / NBRC 16129 / PRD-1).